The primary structure comprises 494 residues: 3-octaprenyl-4-hydroxybenzoate carboxy-lyase (494 aa).

Asparagine 172 serves as a coordination point for Mn(2+). Prenylated FMN contacts are provided by residues 175–177 (IYR), 189–191 (RWL), and 194–195 (RG). Glutamate 238 is a binding site for Mn(2+). Catalysis depends on aspartate 287, which acts as the Proton donor.

It belongs to the UbiD family. As to quaternary structure, homohexamer. Requires prenylated FMN as cofactor. It depends on Mn(2+) as a cofactor.

The protein localises to the cell membrane. It catalyses the reaction a 4-hydroxy-3-(all-trans-polyprenyl)benzoate + H(+) = a 2-(all-trans-polyprenyl)phenol + CO2. The protein operates within cofactor biosynthesis; ubiquinone biosynthesis. In terms of biological role, catalyzes the decarboxylation of 3-octaprenyl-4-hydroxy benzoate to 2-octaprenylphenol, an intermediate step in ubiquinone biosynthesis. This is 3-octaprenyl-4-hydroxybenzoate carboxy-lyase from Citrobacter koseri (strain ATCC BAA-895 / CDC 4225-83 / SGSC4696).